The sequence spans 198 residues: Large ribosomal subunit protein uL23c (198 aa).

A chloroplast-targeting transit peptide spans 1–76; the sequence is MATTAPNLHS…SFGRDLMVAQ (76 aa).

It belongs to the universal ribosomal protein uL23 family. As to quaternary structure, component of the chloroplast large ribosomal subunit (LSU). Mature 70S chloroplast ribosomes of higher plants consist of a small (30S) and a large (50S) subunit. The 30S small subunit contains 1 molecule of ribosomal RNA (16S rRNA) and 24 different proteins. The 50S large subunit contains 3 rRNA molecules (23S, 5S and 4.5S rRNA) and 33 different proteins.

It localises to the plastid. The protein resides in the chloroplast. Its function is as follows. Component of the chloroplast ribosome (chloro-ribosome), a dedicated translation machinery responsible for the synthesis of chloroplast genome-encoded proteins, including proteins of the transcription and translation machinery and components of the photosynthetic apparatus. The chain is Large ribosomal subunit protein uL23c (RPL23) from Spinacia oleracea (Spinach).